Reading from the N-terminus, the 437-residue chain is GTPase Obg (437 aa).

One can recognise an Obg domain in the interval 2-160 (SMFLDTAKIS…RELQLELKIL (159 aa)). Residues 161–338 (ADVGLVGFPS…LMDATAELLA (178 aa)) form the OBG-type G domain. GTP is bound by residues 167 to 174 (GFPSVGKS), 192 to 196 (FTTIV), 214 to 217 (DLPG), 284 to 287 (NKMD), and 319 to 321 (SSL). Ser174 and Thr194 together coordinate Mg(2+). One can recognise an OCT domain in the interval 359-437 (GFNEDERPFE…IGNFEFEFVD (79 aa)).

It belongs to the TRAFAC class OBG-HflX-like GTPase superfamily. OBG GTPase family. In terms of assembly, monomer. Mg(2+) serves as cofactor.

The protein localises to the cytoplasm. Its function is as follows. An essential GTPase which binds GTP, GDP and possibly (p)ppGpp with moderate affinity, with high nucleotide exchange rates and a fairly low GTP hydrolysis rate. Plays a role in control of the cell cycle, stress response, ribosome biogenesis and in those bacteria that undergo differentiation, in morphogenesis control. The polypeptide is GTPase Obg (Streptococcus agalactiae serotype Ia (strain ATCC 27591 / A909 / CDC SS700)).